The sequence spans 287 residues: Pantothenate synthetase (287 aa).

An ATP-binding site is contributed by 37-44 (MGALHEGH). The active-site Proton donor is the histidine 44. A (R)-pantoate-binding site is contributed by glutamine 68. Residue glutamine 68 participates in beta-alanine binding. An ATP-binding site is contributed by 154–157 (GQKD). Residue glutamine 160 coordinates (R)-pantoate. Residues valine 183 and 191–194 (LSSR) each bind ATP.

This sequence belongs to the pantothenate synthetase family. As to quaternary structure, homodimer.

Its subcellular location is the cytoplasm. The catalysed reaction is (R)-pantoate + beta-alanine + ATP = (R)-pantothenate + AMP + diphosphate + H(+). It functions in the pathway cofactor biosynthesis; (R)-pantothenate biosynthesis; (R)-pantothenate from (R)-pantoate and beta-alanine: step 1/1. Its function is as follows. Catalyzes the condensation of pantoate with beta-alanine in an ATP-dependent reaction via a pantoyl-adenylate intermediate. This is Pantothenate synthetase from Leifsonia xyli subsp. xyli (strain CTCB07).